Reading from the N-terminus, the 333-residue chain is Phosphate acyltransferase (333 aa).

Belongs to the PlsX family. Homodimer. Probably interacts with PlsY.

It localises to the cytoplasm. It carries out the reaction a fatty acyl-[ACP] + phosphate = an acyl phosphate + holo-[ACP]. It functions in the pathway lipid metabolism; phospholipid metabolism. Functionally, catalyzes the reversible formation of acyl-phosphate (acyl-PO(4)) from acyl-[acyl-carrier-protein] (acyl-ACP). This enzyme utilizes acyl-ACP as fatty acyl donor, but not acyl-CoA. The sequence is that of Phosphate acyltransferase from Cellvibrio japonicus (strain Ueda107) (Pseudomonas fluorescens subsp. cellulosa).